The following is a 253-amino-acid chain: MNTVANADFNGIVMFERSHRENDLLVKFLTKEHGKRMFFIRNAKKVDFKLRSAILPFSHGQYTGLIRSNGLSYINAALDVQQFENIFQDITLNAYATFVLNLVDAAFDDNVKITSWFERINRALILIDAGNDAEIITDLIQIQLLNSFGISITWDHCVICGRTDLPLDYSEAFGGMLCQSHWERDEHRWHLKPKSARIIGILSAVSIFKLGQISISKETKQEIWNLTADIYKNQVGINLKSRSFIDQMKKWEI.

It belongs to the RecO family.

In terms of biological role, involved in DNA repair and RecF pathway recombination. The chain is DNA repair protein RecO from Pediococcus pentosaceus (strain ATCC 25745 / CCUG 21536 / LMG 10740 / 183-1w).